A 162-amino-acid polypeptide reads, in one-letter code: CD-NTase-associated protein 7 (162 aa).

The interval 138 to 162 is disordered; the sequence is HSGLTQSGGREYSSNGYGMQRKDYN. Over residues 139 to 154 the composition is skewed to polar residues; that stretch reads SGLTQSGGREYSSNGY.

Belongs to the HORMA family. HORMA1 subfamily. In terms of assembly, forms complexes with CdnC with 1:1 and 2:2 stoichimetry, and a 1:1:6 CdnC:Cap7:Cap6 complex.

Sensor protein of a CBASS antivirus system. CBASS (cyclic oligonucleotide-based antiphage signaling system) provides immunity against bacteriophage. The CD-NTase protein synthesizes cyclic nucleotides in response to infection; these serve as specific second messenger signals. The signals activate a diverse range of effectors, leading to bacterial cell death and thus abortive phage infection. A type III CBASS system. Expression of this CBASS system (Cap18-Cap6-Cap7-CdnC-CapW-Cap17) in a susceptible E.coli (strain MG1655) confers resistance to bacteriophage P1. The sensor protein for this CBASS system. Binds to a closure peptide, which allows it to activate CdnC for second messenger synthesis. This chain is CD-NTase-associated protein 7, found in Escherichia coli (strain KTE188).